We begin with the raw amino-acid sequence, 566 residues long: Arginine--tRNA ligase (566 aa).

The 'HIGH' region signature appears at 129 to 139 (ANPTGPLHIGH).

It belongs to the class-I aminoacyl-tRNA synthetase family. As to quaternary structure, monomer.

Its subcellular location is the cytoplasm. The enzyme catalyses tRNA(Arg) + L-arginine + ATP = L-arginyl-tRNA(Arg) + AMP + diphosphate. This chain is Arginine--tRNA ligase, found in Wolbachia pipientis subsp. Culex pipiens (strain wPip).